Here is a 330-residue protein sequence, read N- to C-terminus: Transcription factor TGA6 (330 aa).

Residues 1-13 are compositionally biased toward polar residues; sequence MADTSSRTDVSTD. A disordered region spans residues 1–45; that stretch reads MADTSSRTDVSTDGDTDHRDLGSDRGHMHAAASDSSDRSKDKLDQ. Composition is skewed to basic and acidic residues over residues 15–27 and 35–45; these read DTDH…DRGH and SSDRSKDKLDQ. Positions 44–107 constitute a bZIP domain; that stretch reads DQKTLRRLAQ…SSGDQAHSTG (64 aa). Coiled-coil stretches lie at residues 45–142 and 217–233; these read QKTL…HAGD and INSL…ALSQ. A basic motif region spans residues 46–66; sequence KTLRRLAQNREAARKSRLRKK. The leucine-zipper stretch occupies residues 72–86; that stretch reads LENSRLKLTQLEQEL. The DOG1 domain occupies 111–327; that stretch reads ALAFDAEHSR…RALSSLWLAR (217 aa).

This sequence belongs to the bZIP family. In terms of assembly, binds DNA as a dimer. Interacts with NPR1, NPR3 and NPR4. Interacts with GRXC9/GRX480. In terms of tissue distribution, expressed predominantly in roots and flowers.

Its subcellular location is the nucleus. Transcriptional activator that binds specifically to the DNA sequence 5'-TGACG-3'. Recognizes ocs elements like the as-1 motif of the cauliflower mosaic virus 35S promoter. Binding to the as-1-like cis elements mediate auxin- and salicylic acid-inducible transcription. May be involved in the induction of the systemic acquired resistance (SAR) via its interaction with NPR1. Could also bind to the Hex-motif (5'-TGACGTGG-3') another cis-acting element found in plant histone promoters. The sequence is that of Transcription factor TGA6 (TGA6) from Arabidopsis thaliana (Mouse-ear cress).